Reading from the N-terminus, the 542-residue chain is CTP synthase (542 aa).

The tract at residues 1-265 (MARYIFITGG…DQEVLSAFGI (265 aa)) is amidoligase domain. Residue Ser13 coordinates CTP. Residue Ser13 participates in UTP binding. 14 to 19 (SLGKGL) serves as a coordination point for ATP. Position 54 (Tyr54) interacts with L-glutamine. Asp71 is a binding site for ATP. Positions 71 and 139 each coordinate Mg(2+). Residues 146-148 (DIE), 186-191 (KTKPTQ), and Lys222 each bind CTP. Residues 186-191 (KTKPTQ) and Lys222 contribute to the UTP site. ATP is bound at residue 238-240 (RDV). The Glutamine amidotransferase type-1 domain occupies 291 to 541 (TIAIVGKYTG…IAAAMEQSRL (251 aa)). Gly353 provides a ligand contact to L-glutamine. Cys380 acts as the Nucleophile; for glutamine hydrolysis in catalysis. L-glutamine-binding positions include 381–384 (FGMQ), Glu404, and Arg469. Catalysis depends on residues His514 and Glu516.

The protein belongs to the CTP synthase family. In terms of assembly, homotetramer.

It carries out the reaction UTP + L-glutamine + ATP + H2O = CTP + L-glutamate + ADP + phosphate + 2 H(+). It catalyses the reaction L-glutamine + H2O = L-glutamate + NH4(+). The catalysed reaction is UTP + NH4(+) + ATP = CTP + ADP + phosphate + 2 H(+). It functions in the pathway pyrimidine metabolism; CTP biosynthesis via de novo pathway; CTP from UDP: step 2/2. Allosterically activated by GTP, when glutamine is the substrate; GTP has no effect on the reaction when ammonia is the substrate. The allosteric effector GTP functions by stabilizing the protein conformation that binds the tetrahedral intermediate(s) formed during glutamine hydrolysis. Inhibited by the product CTP, via allosteric rather than competitive inhibition. Its function is as follows. Catalyzes the ATP-dependent amination of UTP to CTP with either L-glutamine or ammonia as the source of nitrogen. Regulates intracellular CTP levels through interactions with the four ribonucleotide triphosphates. This is CTP synthase from Beijerinckia indica subsp. indica (strain ATCC 9039 / DSM 1715 / NCIMB 8712).